The primary structure comprises 149 residues: Calmodulin-2 (149 aa).

An N-acetylalanine modification is found at A2. 4 EF-hand domains span residues 8–43 (EQIA…LGQN), 44–79 (PTEA…KMKD), 81–116 (DSEE…LGEK), and 117–149 (LTDE…MTSK). Ca(2+) contacts are provided by D21, D23, D25, T27, E32, D57, D59, N61, T63, E68, D94, D96, N98, and E105. N6,N6,N6-trimethyllysine is present on K116. Ca(2+)-binding residues include D130, D132, D134, Q136, and E141.

This sequence belongs to the calmodulin family.

In terms of biological role, calmodulin mediates the control of a large number of enzymes, ion channels and other proteins by Ca(2+). Among the enzymes to be stimulated by the calmodulin-Ca(2+) complex are a number of protein kinases and phosphatases. This is Calmodulin-2 (CAM2) from Branchiostoma lanceolatum (Common lancelet).